A 106-amino-acid polypeptide reads, in one-letter code: Small ribosomal subunit protein uS17 (106 aa).

The protein belongs to the universal ribosomal protein uS17 family. Part of the 30S ribosomal subunit.

In terms of biological role, one of the primary rRNA binding proteins, it binds specifically to the 5'-end of 16S ribosomal RNA. The sequence is that of Small ribosomal subunit protein uS17 from Picrophilus torridus (strain ATCC 700027 / DSM 9790 / JCM 10055 / NBRC 100828 / KAW 2/3).